A 200-amino-acid polypeptide reads, in one-letter code: NADH-quinone oxidoreductase subunit C (200 aa).

It belongs to the complex I 30 kDa subunit family. As to quaternary structure, NDH-1 is composed of 14 different subunits. Subunits NuoB, C, D, E, F, and G constitute the peripheral sector of the complex.

The protein localises to the cell inner membrane. It carries out the reaction a quinone + NADH + 5 H(+)(in) = a quinol + NAD(+) + 4 H(+)(out). NDH-1 shuttles electrons from NADH, via FMN and iron-sulfur (Fe-S) centers, to quinones in the respiratory chain. The immediate electron acceptor for the enzyme in this species is believed to be ubiquinone. Couples the redox reaction to proton translocation (for every two electrons transferred, four hydrogen ions are translocated across the cytoplasmic membrane), and thus conserves the redox energy in a proton gradient. The chain is NADH-quinone oxidoreductase subunit C from Burkholderia cenocepacia (strain HI2424).